The primary structure comprises 205 residues: MGIGMDSSTMSGPLVAHSGILDGDYEKRPAVCKMQMRFDLANVGLRVLSLACSLVALVSMASNQESGVVTVFGFKLPVYSKWSYSDSFEFLVGASAAAAAHSLLQLLLCGMKMVKRASTIPSRNHAWLLFAGDQVFAYGMLAAASAAAGVTNLNRTGFRHSDLPNFCKPLHRFCDKAAISIVFAFISSLILGGSAVLDVFWLSKN.

At 1–39 (MGIGMDSSTMSGPLVAHSGILDGDYEKRPAVCKMQMRFD) the chain is on the cytoplasmic side. Residues 40–60 (LANVGLRVLSLACSLVALVSM) form a helical membrane-spanning segment. The Extracellular portion of the chain corresponds to 61 to 89 (ASNQESGVVTVFGFKLPVYSKWSYSDSFE). A helical transmembrane segment spans residues 90-110 (FLVGASAAAAAHSLLQLLLCG). Topologically, residues 111 to 125 (MKMVKRASTIPSRNH) are cytoplasmic. Residues 126–146 (AWLLFAGDQVFAYGMLAAASA) form a helical membrane-spanning segment. Residues 147–176 (AAGVTNLNRTGFRHSDLPNFCKPLHRFCDK) lie on the Extracellular side of the membrane. N-linked (GlcNAc...) asparagine glycosylation occurs at Asn-154. A helical transmembrane segment spans residues 177–197 (AAISIVFAFISSLILGGSAVL). The Cytoplasmic portion of the chain corresponds to 198–205 (DVFWLSKN).

Belongs to the Casparian strip membrane proteins (CASP) family. Homodimer and heterodimers.

The protein resides in the cell membrane. The sequence is that of CASP-like protein 3A1 from Picea sitchensis (Sitka spruce).